Consider the following 320-residue polypeptide: Myoblast determination protein 1 (320 aa).

Met-1 participates in a covalent cross-link: Peptide (Met-Gly) (interchain with G-Cter in ubiquitin). Lys-104 carries the N6-methyllysine; by EHMT2 modification. The 52-residue stretch at 109 to 160 (DRRKAATMRERRRLSKVNEAFETLKRCTSSNPNQRLPKVEILRNAIRYIEGL) folds into the bHLH domain. Disordered stretches follow at residues 174–219 (AAAA…PPSG) and 262–320 (ESPA…YQVL). 2 stretches are compositionally biased toward polar residues: residues 197–207 (SDASSPRSNCS) and 291–301 (GESSGDPTQSP).

As to quaternary structure, efficient DNA binding requires dimerization with another bHLH protein. Seems to form active heterodimers with ITF-2. Interacts with SUV39H1. Interacts with DDX5. Interacts with CHD2. Interacts with TSC22D3. Interacts with SETD3. Interacts with P-TEFB complex; promotes the transcriptional activity of MYOD1 through its CDK9-mediated phosphorylation. Interacts with CSRP3. Interacts with NUPR1. Phosphorylated by CDK9. This phosphorylation promotes its function in muscle differentiation. In terms of processing, acetylated by a complex containing EP300 and PCAF. The acetylation is essential to activate target genes. Conversely, its deacetylation by SIRT1 inhibits its function. Post-translationally, ubiquitinated on the N-terminus; which is required for proteasomal degradation. Methylation at Lys-104 by EHMT2/G9a inhibits myogenic activity.

The protein resides in the nucleus. Acts as a transcriptional activator that promotes transcription of muscle-specific target genes and plays a role in muscle differentiation. Together with MYF5 and MYOG, co-occupies muscle-specific gene promoter core region during myogenesis. Induces fibroblasts to differentiate into myoblasts. Interacts with and is inhibited by the twist protein. This interaction probably involves the basic domains of both proteins. This Homo sapiens (Human) protein is Myoblast determination protein 1 (MYOD1).